A 426-amino-acid polypeptide reads, in one-letter code: DNA primase DnaG (426 aa).

The 75-residue stretch at 171–245 (DTVILVEGRA…KVDFVARAPP (75 aa)) folds into the Toprim domain. Positions 177, 219, and 221 each coordinate Mg(2+). Residues 407 to 426 (KSEENIQESVSTGESAQTSP) are disordered. A compositionally biased stretch (polar residues) spans 413–426 (QESVSTGESAQTSP).

The protein belongs to the archaeal DnaG primase family. As to quaternary structure, forms a ternary complex with MCM helicase and DNA. Component of the archaeal exosome complex. Mg(2+) serves as cofactor.

The enzyme catalyses ssDNA + n NTP = ssDNA/pppN(pN)n-1 hybrid + (n-1) diphosphate.. Its function is as follows. RNA polymerase that catalyzes the synthesis of short RNA molecules used as primers for DNA polymerase during DNA replication. Also part of the exosome, which is a complex involved in RNA degradation. Acts as a poly(A)-binding protein that enhances the interaction between heteromeric, adenine-rich transcripts and the exosome. This Thermofilum pendens (strain DSM 2475 / Hrk 5) protein is DNA primase DnaG.